The primary structure comprises 220 residues: Ribosomal RNA large subunit methyltransferase E (220 aa).

S-adenosyl-L-methionine is bound by residues G64, W66, D92, D108, and D133. K173 serves as the catalytic Proton acceptor.

This sequence belongs to the class I-like SAM-binding methyltransferase superfamily. RNA methyltransferase RlmE family.

The protein localises to the cytoplasm. The catalysed reaction is uridine(2552) in 23S rRNA + S-adenosyl-L-methionine = 2'-O-methyluridine(2552) in 23S rRNA + S-adenosyl-L-homocysteine + H(+). In terms of biological role, specifically methylates the uridine in position 2552 of 23S rRNA at the 2'-O position of the ribose in the fully assembled 50S ribosomal subunit. The sequence is that of Ribosomal RNA large subunit methyltransferase E from Acidovorax sp. (strain JS42).